Reading from the N-terminus, the 142-residue chain is HTH-type transcriptional regulator MntR (142 aa).

Residues 1-63 enclose the HTH dtxR-type domain; sequence MPTPSMEDYI…YEKYRGLVLT (63 aa). The Mn(2+) site is built by Asp-8, Glu-11, His-77, Glu-99, Glu-102, and His-103.

This sequence belongs to the DtxR/MntR family. Homodimer.

The protein localises to the cytoplasm. With respect to regulation, DNA binding is strongly activated by Mn(2+). Central regulator of manganese homeostasis. The chain is HTH-type transcriptional regulator MntR from Bacillus cereus (strain G9842).